A 323-amino-acid chain; its full sequence is tRNA(Ile)-lysidine synthase (323 aa).

33–38 (SGGSDS) is a binding site for ATP.

This sequence belongs to the tRNA(Ile)-lysidine synthase family.

The protein localises to the cytoplasm. The catalysed reaction is cytidine(34) in tRNA(Ile2) + L-lysine + ATP = lysidine(34) in tRNA(Ile2) + AMP + diphosphate + H(+). Ligates lysine onto the cytidine present at position 34 of the AUA codon-specific tRNA(Ile) that contains the anticodon CAU, in an ATP-dependent manner. Cytidine is converted to lysidine, thus changing the amino acid specificity of the tRNA from methionine to isoleucine. The polypeptide is tRNA(Ile)-lysidine synthase (Mycobacterium leprae (strain TN)).